The chain runs to 353 residues: uncharacterized protein (353 aa).

Positions 1–20 are cleaved as a signal peptide; the sequence is MLMRSVCFILLAVLLFSLSA. Residue C21 is the site of N-palmitoyl cysteine attachment. A lipid anchor (S-diacylglycerol cysteine) is attached at C21.

Its subcellular location is the cell membrane. This is an uncharacterized protein from Bacillus subtilis (strain 168).